The chain runs to 140 residues: Large ribosomal subunit protein uL16 (140 aa).

The span at 1 to 14 (MLMPKKVKHRKQMK) shows a compositional bias: basic residues. The disordered stretch occupies residues 1–20 (MLMPKKVKHRKQMKGRMSGT).

Belongs to the universal ribosomal protein uL16 family. As to quaternary structure, part of the 50S ribosomal subunit.

Functionally, binds 23S rRNA and is also seen to make contacts with the A and possibly P site tRNAs. The sequence is that of Large ribosomal subunit protein uL16 from Geotalea daltonii (strain DSM 22248 / JCM 15807 / FRC-32) (Geobacter daltonii).